Reading from the N-terminus, the 474-residue chain is 6-phospho-beta-galactosidase (474 aa).

Positions 19, 116, 159, 160, and 297 each coordinate D-galactose 6-phosphate. Glu-160 serves as the catalytic Proton donor. Glu-375 (nucleophile) is an active-site residue. D-galactose 6-phosphate contacts are provided by Ser-433, Trp-434, Lys-440, and Tyr-442.

It belongs to the glycosyl hydrolase 1 family.

The enzyme catalyses a 6-phospho-beta-D-galactoside + H2O = D-galactose 6-phosphate + an alcohol. It functions in the pathway carbohydrate metabolism; lactose degradation; D-galactose 6-phosphate and beta-D-glucose from lactose 6-phosphate: step 1/1. The protein is 6-phospho-beta-galactosidase of Lacticaseibacillus casei (Lactobacillus casei).